The chain runs to 404 residues: MGSLLRPVDLVNQPLGFQERYKILQKLFKQLQKAYAHTKGTNIDLERLATRLEVHVAKNSLSGQSYKFNMSILLRDVLKYKGDLSKIKINGRPLKGAKPHLSSIGNANSITTKSKAMEALKALILDSKVLEKNGYIVKEMQNKTNDDNSTQLYAPCLRCSSNFKKTDIMEKTLCRYHPLKRIYNRDTKNHQYPCCGETTDSVSFLRLGCKTFFHHVFRGESYDELCKISKFSSTDDIDGVENVLSLDCEMAFTSLGYEMIRLTIVDFFTGKTLFDHVIQPIGDIVDLNSDFSGVHEIDRTNCPTYKEALDVFLSENLINKNSILIGHGLENDLNVMRLFHNKVIDTAILYSRTKFKVSLKNLAFEVLSRKIQNGEHDSSQDAIATMDVVKVKIGISPSQNKWEK.

Residues V243–V389 enclose the Exonuclease domain.

The protein belongs to the REXO1/REXO3 family.

Its subcellular location is the cytoplasm. It is found in the nucleus. Its function is as follows. 3' to 5' exoribonuclease required for proper 3' end maturation of MRP RNA and of the U5L snRNA. This is RNA exonuclease 3 (REX3) from Saccharomyces cerevisiae (strain ATCC 204508 / S288c) (Baker's yeast).